Consider the following 395-residue polypeptide: Calcium sensing receptor, chloroplastic (395 aa).

Residues 1 to 12 (MAPVPVSVSATL) are compositionally biased toward low complexity. Positions 1 to 27 (MAPVPVSVSATLAPPPAAPPKTTSRSW) are disordered. Residues 1–39 (MAPVPVSVSATLAPPPAAPPKTTSRSWERRAPADAAFAA) constitute a chloroplast transit peptide. The Lumenal, thylakoid segment spans residues 40-182 (ASSVAGSAAL…TITSLGPEDY (143 aa)). A helical membrane pass occupies residues 183–203 (VVAAGXAFLAYLLVPPVWSLV). Topologically, residues 204–395 (SSSLRGYKGD…TRKLLPGGVD (192 aa)) are stromal. The Rhodanese domain maps to 224–345 (TTQGYVLIDV…WAQSRLGTDS (122 aa)). Threonine 377 is subject to Phosphothreonine.

In terms of processing, phosphorylated in both bundle sheath and mesophyll cells, under both low and high light regimes (70 vs 900 umol photons/m-2/s).

The protein localises to the plastid. It localises to the chloroplast thylakoid membrane. Modulates cytoplasmic Ca(2+) concentration and is crucial for proper stomatal regulation in response to elevated levels of external Ca(2+). May function by regulating concentrations of inositol 1,4,5-trisphosphate (IP3), which in turn triggers release of Ca(2+) from internal stores. May play a role in de-etiolation. This Zea mays (Maize) protein is Calcium sensing receptor, chloroplastic.